Consider the following 209-residue polypeptide: Yop proteins translocation protein K (209 aa).

In terms of biological role, belongs to an operon involved in the translocation of Yop proteins across the bacterial membranes or in the specific control of this function. This is Yop proteins translocation protein K (yscK) from Yersinia enterocolitica.